The sequence spans 790 residues: Pentatricopeptide repeat-containing protein At1g25360 (790 aa).

PPR repeat units follow at residues 48–82, 84–109, 112–146, 147–182, 183–217, 218–248, 250–284, 285–315, 319–349, 350–384, 385–415, 416–450, 451–481, 482–516, 517–551, and 553–583; these read RAHI…DKIA, TTMV…APVC, DTVM…GFKP, DNFT…GAGY, ITSV…ILEK, DERS…MDDN, KLVA…GIEL, DEFT…VLRR, SFHF…MPAK, DLVS…NILS, WMIM…GFEP, CDYA…GFDS, SLSA…MPCL, DSVS…GIRP, DRIT…YRIP, and GADH…LPFK. Residues 588-663 are type E motif; sequence IWEALLSGCR…EVACSWIEME (76 aa). The tract at residues 664-694 is type E(+) motif; it reads TQVHTFLVDDTSHPEAEAVYIYLQDLGKEMR. A type DYW motif region spans residues 695–790; it reads RLGYVPDTSF…NGECSCGNFW (96 aa).

Belongs to the PPR family. PCMP-H subfamily.

This is Pentatricopeptide repeat-containing protein At1g25360 (PCMP-H74) from Arabidopsis thaliana (Mouse-ear cress).